Reading from the N-terminus, the 229-residue chain is Large ribosomal subunit protein uL1 (229 aa).

It belongs to the universal ribosomal protein uL1 family. In terms of assembly, part of the 50S ribosomal subunit.

Its function is as follows. Binds directly to 23S rRNA. The L1 stalk is quite mobile in the ribosome, and is involved in E site tRNA release. Functionally, protein L1 is also a translational repressor protein, it controls the translation of the L11 operon by binding to its mRNA. The protein is Large ribosomal subunit protein uL1 of Ureaplasma parvum serovar 3 (strain ATCC 27815 / 27 / NCTC 11736).